The primary structure comprises 430 residues: MLDINYIRQNPEEVATMLHDRQLQGDEPKLQRLLFIDTERRTLVQKTDELKALRNTRSKEIAELKKSGSGSADQLIADMQAVGEEIAGLDSRLSALNMEMEEILLALPNRLDPSVPVGRTAEDNLVFGEPVHFPHPLEFDVKNHLELGKALGILDFERGAKVTGAGFPVYVGKGARLERALINFMLDRHTEEHGYTEVFPPFLVNRDSLRGTGQWPKFADQVYHMEEDELYAIPTAEVPVTNLHRDEMLSAEALPISYAAYSACFRREAGSYGKDTRGFLRVHQFNKVEMVKFTRPEESYAALETIRGHAEAILCALEIPYRVLLLCSGDISANAAKCYDIEVWSPAERKYLEASSCSNFEDYQARRANIRFKADGKSKPEFVHTLNGSGLATSRLMVSIIEHYQTLEGGIRVPEVLVPYTGFSQISPSC.

235-237 (TAE) provides a ligand contact to L-serine. ATP-binding positions include 266-268 (RRE) and Val282. Glu289 provides a ligand contact to L-serine. An ATP-binding site is contributed by 353-356 (EASS). An L-serine-binding site is contributed by Ser389.

This sequence belongs to the class-II aminoacyl-tRNA synthetase family. Type-1 seryl-tRNA synthetase subfamily. In terms of assembly, homodimer. The tRNA molecule binds across the dimer.

The protein localises to the cytoplasm. It carries out the reaction tRNA(Ser) + L-serine + ATP = L-seryl-tRNA(Ser) + AMP + diphosphate + H(+). It catalyses the reaction tRNA(Sec) + L-serine + ATP = L-seryl-tRNA(Sec) + AMP + diphosphate + H(+). It functions in the pathway aminoacyl-tRNA biosynthesis; selenocysteinyl-tRNA(Sec) biosynthesis; L-seryl-tRNA(Sec) from L-serine and tRNA(Sec): step 1/1. Its function is as follows. Catalyzes the attachment of serine to tRNA(Ser). Is also able to aminoacylate tRNA(Sec) with serine, to form the misacylated tRNA L-seryl-tRNA(Sec), which will be further converted into selenocysteinyl-tRNA(Sec). The polypeptide is Serine--tRNA ligase (Chlorobium luteolum (strain DSM 273 / BCRC 81028 / 2530) (Pelodictyon luteolum)).